Consider the following 376-residue polypeptide: WD repeat-containing protein wdr-5.1 (376 aa).

The span at 1–24 (MDTSENAASAAEQQPTQQIDQLTV) shows a compositional bias: polar residues. The segment at 1 to 70 (MDTSENAASA…TPNPNAAGAS (70 aa)) is disordered. A compositionally biased stretch (low complexity) spans 25-53 (PNAPDGGSSAPAPSTSPNSISPSNPTGTP). WD repeat units lie at residues 85-115 (GHTKSISSAKFSPCGKYLGTSSADKTVKIWN), 127-157 (GHKLGVNDIAWSSDSRCVVSASDDKTLKIFE), 169-199 (GHNNYVFCCNFNPQSSLVVSGSFDESVRIWD), 211-241 (AHSDPVSAVSFNRDGSLIASGSYDGLVRIWD), 254-284 (DENPPVAFVKFSPNGKYILASNLDSTLKLWD), 296-329 (GHENSKYCIFANFSVTGGKWIISGSEDCKIYIWN), and 341-373 (GHTQPVLASDCHPVQNIIASGALEPDNKIHIWR).

The protein belongs to the WD repeat WDR5/wds family. In terms of assembly, component of the SET2 complex (also known as the SET1/COMPASS complex), which contains at least set-2, swd-2.1, cfp-1, rbbp-5, wdr-5.1, dpy-30 and ash-2. Within the complex, interacts with cfp-1, ash-2, dpy-30 and hda-1. Interacts with histone H3 both unmethylated and methylated at 'Lys-4'. Interacts with jmjd-3.1, ceh-6, sox-2, sem-4 and egl-27. Interacts with set-2. In terms of tissue distribution, enriched in the germline. Detected in all nuclei of the embryo. In larvae, expression is detected in the nuclei of seam cells, somatic gonad precursor cells Z1 and Z4, vulval precursor cells, distal tip cells, hypodermal cells, intestinal and muscle cells. Also detected in the neurons from the ventral nerve cord, head and tail region. Expressed in the head and tail region, intestinal cells, muscle cells, cells of the vulva, spermatheca and sheath cells in adults.

The protein resides in the nucleus. Contributes to histone modification. May position the N-terminus of histone H3 for efficient trimethylation at 'Lys-4'. Required for di- and trimethylation, particularly for the trimethylation at 'Lys-4' of histone H3. Not required for demethylation of histone H3 'Lys-27'. H3 'Lys-4' methylation represents a specific tag for epigenetic transcriptional activation, germline establishment, maintenance and function. Implicated in the epigenetic inheritance of lifespan over several generations. Acts in the germline to limit the longevity of the soma, probably by regulating a lipid metabolism pathway that signals from the germline to the intestine, thereby preventing accumulation of mono-unsaturated fatty acids. Required for RNA interference with probable antagonistic role against hpl-2 function. Plays a role in vulval cell fate specification by acting in the synthetic multivulva pathway independent of set-2. Sex determining protein required in the germline to promote the spermatogenesis to oogenesis switch during the late larval stages of development. Acts with the sex determining factor tra-1, and redundantly with wdr-5.2, to regulate fog-3 expression, which in turn determines germ cell fate. Cooperates with jmjd-3.1, egl-27 and unc-3 to ensure robust transdifferentiation of the Y rectal cell to the PDA motor neuron during larval development. This chain is WD repeat-containing protein wdr-5.1 (wdr-5.1), found in Caenorhabditis elegans.